A 253-amino-acid polypeptide reads, in one-letter code: 3-deoxy-manno-octulosonate cytidylyltransferase (253 aa).

Belongs to the KdsB family.

The protein localises to the cytoplasm. The enzyme catalyses 3-deoxy-alpha-D-manno-oct-2-ulosonate + CTP = CMP-3-deoxy-beta-D-manno-octulosonate + diphosphate. It participates in nucleotide-sugar biosynthesis; CMP-3-deoxy-D-manno-octulosonate biosynthesis; CMP-3-deoxy-D-manno-octulosonate from 3-deoxy-D-manno-octulosonate and CTP: step 1/1. Its pathway is bacterial outer membrane biogenesis; lipopolysaccharide biosynthesis. Activates KDO (a required 8-carbon sugar) for incorporation into bacterial lipopolysaccharide in Gram-negative bacteria. This chain is 3-deoxy-manno-octulosonate cytidylyltransferase, found in Haemophilus ducreyi (strain 35000HP / ATCC 700724).